The following is a 132-amino-acid chain: Small ribosomal subunit protein uS8 (132 aa).

The protein belongs to the universal ribosomal protein uS8 family. Part of the 30S ribosomal subunit. Contacts proteins S5 and S12.

One of the primary rRNA binding proteins, it binds directly to 16S rRNA central domain where it helps coordinate assembly of the platform of the 30S subunit. The polypeptide is Small ribosomal subunit protein uS8 (Francisella philomiragia subsp. philomiragia (strain ATCC 25017 / CCUG 19701 / FSC 153 / O#319-036)).